The primary structure comprises 546 residues: Pyrophosphate--fructose 6-phosphate 1-phosphotransferase (546 aa).

G80 is a diphosphate binding site. Residue D174 coordinates Mg(2+). Substrate is bound by residues 202 to 204 (TID), 241 to 242 (KY), 249 to 251 (MGR), E310, and 420 to 423 (YEGR). The Proton acceptor role is filled by D204.

Belongs to the phosphofructokinase type A (PFKA) family. PPi-dependent PFK group II subfamily. Clade 'Long' sub-subfamily. As to quaternary structure, homodimer. The cofactor is Mg(2+). Mn(2+) is required as a cofactor.

It is found in the cytoplasm. It carries out the reaction beta-D-fructose 6-phosphate + diphosphate = beta-D-fructose 1,6-bisphosphate + phosphate + H(+). It functions in the pathway carbohydrate degradation; glycolysis; D-glyceraldehyde 3-phosphate and glycerone phosphate from D-glucose: step 3/4. Non-allosteric. Competitively inhibited by PPi, Pi and fructose 1,6-bisphosphate. Catalyzes the phosphorylation of D-fructose 6-phosphate, the first committing step of glycolysis. Uses inorganic phosphate (PPi) as phosphoryl donor instead of ATP like common ATP-dependent phosphofructokinases (ATP-PFKs), which renders the reaction reversible, and can thus function both in glycolysis and gluconeogenesis. Consistently, PPi-PFK can replace the enzymes of both the forward (ATP-PFK) and reverse (fructose-bisphosphatase (FBPase)) reactions. This Entamoeba histolytica (strain ATCC 30459 / HM-1:IMSS / ABRM) protein is Pyrophosphate--fructose 6-phosphate 1-phosphotransferase.